We begin with the raw amino-acid sequence, 315 residues long: MSVPTVTSWTGAPILLGVIGGSGLYKLDSITPVAEISISTPWGSASSPITIAKTSAGNHVAFLARHGRDHAILPSNVPNLANIAALKHLGVKAIVAFSAVGSLREEIAPKDFVIPSQIIDRTKGVRRASFFGFGDEESVVAHAGFGDPFCETLRPIVYSTVQATLASHPIKVHTDKTVVCMEGPQFSTRAESLMYRTWGGDIINMSVLPEAKLAREAEIAYVLIATATDYDAWRPSTAAVNVAEVMESLKANVEASNLVTTKVLDRVWLEIDTDEKPAVKNIKDSTKFSIMTKSQVIPDKAKQNLRFLHPWFARD.

Phosphate contacts are provided by residues Ser-22, 65 to 66 (RH), and 98 to 99 (SA). Residue Met-205 coordinates substrate. Residue Ser-206 coordinates phosphate. Substrate is bound at residue 229 to 231 (DYD).

It belongs to the PNP/MTAP phosphorylase family. MTAP subfamily. In terms of assembly, homotrimer.

It localises to the cytoplasm. Its subcellular location is the nucleus. The enzyme catalyses S-methyl-5'-thioadenosine + phosphate = 5-(methylsulfanyl)-alpha-D-ribose 1-phosphate + adenine. The protein operates within amino-acid biosynthesis; L-methionine biosynthesis via salvage pathway; S-methyl-5-thio-alpha-D-ribose 1-phosphate from S-methyl-5'-thioadenosine (phosphorylase route): step 1/1. Functionally, catalyzes the reversible phosphorylation of S-methyl-5'-thioadenosine (MTA) to adenine and 5-methylthioribose-1-phosphate. Involved in the breakdown of MTA, a major by-product of polyamine biosynthesis. Responsible for the first step in the methionine salvage pathway after MTA has been generated from S-adenosylmethionine. Has broad substrate specificity with 6-aminopurine nucleosides as preferred substrates. The polypeptide is S-methyl-5'-thioadenosine phosphorylase (Mycosarcoma maydis (Corn smut fungus)).